The chain runs to 257 residues: NH(3)-dependent NAD(+) synthetase (257 aa).

Position 28–35 (28–35 (GISGGVDS)) interacts with ATP. D34 lines the Mg(2+) pocket. Position 109 (R109) interacts with deamido-NAD(+). T129 lines the ATP pocket. E134 serves as a coordination point for Mg(2+). K142 and D149 together coordinate deamido-NAD(+). ATP-binding residues include K158 and S180. 240–241 (HK) contacts deamido-NAD(+).

Belongs to the NAD synthetase family. Homodimer.

It carries out the reaction deamido-NAD(+) + NH4(+) + ATP = AMP + diphosphate + NAD(+) + H(+). It functions in the pathway cofactor biosynthesis; NAD(+) biosynthesis; NAD(+) from deamido-NAD(+) (ammonia route): step 1/1. Its function is as follows. Catalyzes the ATP-dependent amidation of deamido-NAD to form NAD. Uses ammonia as a nitrogen source. The chain is NH(3)-dependent NAD(+) synthetase from Pyrococcus furiosus (strain ATCC 43587 / DSM 3638 / JCM 8422 / Vc1).